The chain runs to 160 residues: Cytochrome b6-f complex subunit 4 (160 aa).

Transmembrane regions (helical) follow at residues 36–56, 95–115, and 131–151; these read LLYI…GLAV, LLGV…PFLE, and TVFL…TLPI.

It belongs to the cytochrome b family. PetD subfamily. In terms of assembly, the 4 large subunits of the cytochrome b6-f complex are cytochrome b6, subunit IV (17 kDa polypeptide, petD), cytochrome f and the Rieske protein, while the 4 small subunits are petG, petL, petM and petN. The complex functions as a dimer.

The protein resides in the plastid. It is found in the chloroplast thylakoid membrane. Functionally, component of the cytochrome b6-f complex, which mediates electron transfer between photosystem II (PSII) and photosystem I (PSI), cyclic electron flow around PSI, and state transitions. This chain is Cytochrome b6-f complex subunit 4, found in Solanum bulbocastanum (Wild potato).